We begin with the raw amino-acid sequence, 425 residues long: Serine--tRNA ligase (425 aa).

230–232 (TAE) is an L-serine binding site. Position 261 to 263 (261 to 263 (RSE)) interacts with ATP. Glu-284 is an L-serine binding site. An ATP-binding site is contributed by 348–351 (EISS). Residue Ser-384 participates in L-serine binding.

It belongs to the class-II aminoacyl-tRNA synthetase family. Type-1 seryl-tRNA synthetase subfamily. In terms of assembly, homodimer. The tRNA molecule binds across the dimer.

The protein localises to the cytoplasm. The catalysed reaction is tRNA(Ser) + L-serine + ATP = L-seryl-tRNA(Ser) + AMP + diphosphate + H(+). It carries out the reaction tRNA(Sec) + L-serine + ATP = L-seryl-tRNA(Sec) + AMP + diphosphate + H(+). Its pathway is aminoacyl-tRNA biosynthesis; selenocysteinyl-tRNA(Sec) biosynthesis; L-seryl-tRNA(Sec) from L-serine and tRNA(Sec): step 1/1. Functionally, catalyzes the attachment of serine to tRNA(Ser). Is also able to aminoacylate tRNA(Sec) with serine, to form the misacylated tRNA L-seryl-tRNA(Sec), which will be further converted into selenocysteinyl-tRNA(Sec). The sequence is that of Serine--tRNA ligase from Streptococcus pyogenes serotype M4 (strain MGAS10750).